The primary structure comprises 295 residues: Pyridoxal 5'-phosphate synthase subunit PdxS (295 aa).

A D-ribose 5-phosphate-binding site is contributed by D25. The Schiff-base intermediate with D-ribose 5-phosphate role is filled by K82. G154 serves as a coordination point for D-ribose 5-phosphate. Position 166 (R166) interacts with D-glyceraldehyde 3-phosphate. Residues G215 and 236–237 (GS) contribute to the D-ribose 5-phosphate site.

It belongs to the PdxS/SNZ family. As to quaternary structure, in the presence of PdxT, forms a dodecamer of heterodimers.

It carries out the reaction aldehydo-D-ribose 5-phosphate + D-glyceraldehyde 3-phosphate + L-glutamine = pyridoxal 5'-phosphate + L-glutamate + phosphate + 3 H2O + H(+). The protein operates within cofactor biosynthesis; pyridoxal 5'-phosphate biosynthesis. Functionally, catalyzes the formation of pyridoxal 5'-phosphate from ribose 5-phosphate (RBP), glyceraldehyde 3-phosphate (G3P) and ammonia. The ammonia is provided by the PdxT subunit. Can also use ribulose 5-phosphate and dihydroxyacetone phosphate as substrates, resulting from enzyme-catalyzed isomerization of RBP and G3P, respectively. This Listeria innocua serovar 6a (strain ATCC BAA-680 / CLIP 11262) protein is Pyridoxal 5'-phosphate synthase subunit PdxS.